Consider the following 293-residue polypeptide: Ribosomal protein L11 methyltransferase (293 aa).

The S-adenosyl-L-methionine site is built by Thr-145, Gly-166, Asp-188, and Asn-230.

It belongs to the methyltransferase superfamily. PrmA family.

It is found in the cytoplasm. It catalyses the reaction L-lysyl-[protein] + 3 S-adenosyl-L-methionine = N(6),N(6),N(6)-trimethyl-L-lysyl-[protein] + 3 S-adenosyl-L-homocysteine + 3 H(+). In terms of biological role, methylates ribosomal protein L11. The polypeptide is Ribosomal protein L11 methyltransferase (Klebsiella pneumoniae (strain 342)).